Here is a 184-residue protein sequence, read N- to C-terminus: UPF0149 protein PA14_69010 (184 aa).

It belongs to the UPF0149 family.

In Pseudomonas aeruginosa (strain UCBPP-PA14), this protein is UPF0149 protein PA14_69010.